The following is a 156-amino-acid chain: Arginine repressor (156 aa).

It belongs to the ArgR family.

It is found in the cytoplasm. It participates in amino-acid biosynthesis; L-arginine biosynthesis [regulation]. Its function is as follows. Regulates arginine biosynthesis genes. The polypeptide is Arginine repressor (Sodalis glossinidius (strain morsitans)).